Reading from the N-terminus, the 201-residue chain is CASP-like protein 2B2 (201 aa).

Over 1-28 (MSYLGVGVSPGNVSGSTTKMKLIDRKVR) the chain is Cytoplasmic. Residues 29–49 (VTELILRCLVCVLALVAAILI) traverse the membrane as a helical segment. Topologically, residues 50–71 (ATDVQVREIFMIQKKAKFTDMK) are extracellular. The helical transmembrane segment at 72 to 92 (ALVLLVVVNGIAAGYSLVQAV) threads the bilayer. Over 93-108 (RCVVGLMKGRVLFSKP) the chain is Cytoplasmic. A helical transmembrane segment spans residues 109–129 (LAWAIFFGDQAVAYLCVAGVA). Residues 130–166 (AAAQSAAFAKLGEPELQWMKICNMYGKFCNQVGEGIA) are Extracellular-facing. A helical membrane pass occupies residues 167-187 (SALFACIGMVLISCISAFGVF). The Cytoplasmic segment spans residues 188-201 (RLYGGSKSRPSSRW).

Belongs to the Casparian strip membrane proteins (CASP) family. In terms of assembly, homodimer and heterodimers.

Its subcellular location is the cell membrane. This Arabidopsis thaliana (Mouse-ear cress) protein is CASP-like protein 2B2.